The primary structure comprises 263 residues: tRNA1(Val) (adenine(37)-N6)-methyltransferase (263 aa).

Belongs to the methyltransferase superfamily. tRNA (adenine-N(6)-)-methyltransferase family.

It localises to the cytoplasm. The catalysed reaction is adenosine(37) in tRNA1(Val) + S-adenosyl-L-methionine = N(6)-methyladenosine(37) in tRNA1(Val) + S-adenosyl-L-homocysteine + H(+). Specifically methylates the adenine in position 37 of tRNA(1)(Val) (anticodon cmo5UAC). This chain is tRNA1(Val) (adenine(37)-N6)-methyltransferase, found in Salmonella choleraesuis (strain SC-B67).